A 163-amino-acid chain; its full sequence is MAIFGEAETWVAIAFVILLGVFAYLGVHRTVLQALDKRRDRIKAELDEARKLKDEAAKLLADYRARRASAEREAQAIVDSAKADAERIAAEAKAKLEDFVARRTKTAESKIALAEAQALADVRAAAAEAAVAAASRILSESVKGNLADELLSKGIQEVRGKLN.

The helical transmembrane segment at A7–V27 threads the bilayer.

It belongs to the ATPase B chain family. As to quaternary structure, F-type ATPases have 2 components, F(1) - the catalytic core - and F(0) - the membrane proton channel. F(1) has five subunits: alpha(3), beta(3), gamma(1), delta(1), epsilon(1). F(0) has three main subunits: a(1), b(2) and c(10-14). The alpha and beta chains form an alternating ring which encloses part of the gamma chain. F(1) is attached to F(0) by a central stalk formed by the gamma and epsilon chains, while a peripheral stalk is formed by the delta and b chains.

It localises to the cell inner membrane. In terms of biological role, f(1)F(0) ATP synthase produces ATP from ADP in the presence of a proton or sodium gradient. F-type ATPases consist of two structural domains, F(1) containing the extramembraneous catalytic core and F(0) containing the membrane proton channel, linked together by a central stalk and a peripheral stalk. During catalysis, ATP synthesis in the catalytic domain of F(1) is coupled via a rotary mechanism of the central stalk subunits to proton translocation. Component of the F(0) channel, it forms part of the peripheral stalk, linking F(1) to F(0). The chain is ATP synthase subunit b 1 from Rhodopseudomonas palustris (strain ATCC BAA-98 / CGA009).